The chain runs to 350 residues: FAD:protein FMN transferase (350 aa).

The first 19 residues, 1–19 (MDMTFFRAALLGACVLLSG), serve as a signal peptide directing secretion. A lipid anchor (N-palmitoyl cysteine) is attached at cysteine 20. Cysteine 20 carries the S-diacylglycerol cysteine lipid modification. FAD-binding positions include methionine 41, tryptophan 78, 119 to 121 (AMD), and aspartate 181. Threonine 184 lines the Mg(2+) pocket. The FAD site is built by glutamate 187 and isoleucine 272. 3 residues coordinate Mg(2+): aspartate 298, aspartate 301, and threonine 302.

Belongs to the ApbE family. It depends on Mg(2+) as a cofactor.

Its subcellular location is the cell inner membrane. It carries out the reaction L-threonyl-[protein] + FAD = FMN-L-threonyl-[protein] + AMP + H(+). Flavin transferase that catalyzes the transfer of the FMN moiety of FAD and its covalent binding to the hydroxyl group of a threonine residue in a target flavoprotein such as NqrB and NqrC, two subunits of the NQR complex. In Klebsiella pneumoniae (strain 342), this protein is FAD:protein FMN transferase.